Here is a 190-residue protein sequence, read N- to C-terminus: Orotate phosphoribosyltransferase (190 aa).

114 to 122 contributes to the 5-phospho-alpha-D-ribose 1-diphosphate binding site; the sequence is EDVITTGGS. The orotate site is built by Thr-118 and Arg-146.

The protein belongs to the purine/pyrimidine phosphoribosyltransferase family. PyrE subfamily. In terms of assembly, homodimer. Requires Mg(2+) as cofactor.

The catalysed reaction is orotidine 5'-phosphate + diphosphate = orotate + 5-phospho-alpha-D-ribose 1-diphosphate. It participates in pyrimidine metabolism; UMP biosynthesis via de novo pathway; UMP from orotate: step 1/2. Catalyzes the transfer of a ribosyl phosphate group from 5-phosphoribose 1-diphosphate to orotate, leading to the formation of orotidine monophosphate (OMP). The protein is Orotate phosphoribosyltransferase of Pelotomaculum thermopropionicum (strain DSM 13744 / JCM 10971 / SI).